The sequence spans 98 residues: Co-chaperonin GroES (98 aa).

It belongs to the GroES chaperonin family. In terms of assembly, heptamer of 7 subunits arranged in a ring. Interacts with the chaperonin GroEL.

It is found in the cytoplasm. Functionally, together with the chaperonin GroEL, plays an essential role in assisting protein folding. The GroEL-GroES system forms a nano-cage that allows encapsulation of the non-native substrate proteins and provides a physical environment optimized to promote and accelerate protein folding. GroES binds to the apical surface of the GroEL ring, thereby capping the opening of the GroEL channel. This chain is Co-chaperonin GroES, found in Bartonella bacilliformis (strain ATCC 35685 / KC583 / Herrer 020/F12,63).